A 742-amino-acid polypeptide reads, in one-letter code: Two-component response regulator-like PRR37 (742 aa).

In terms of domain architecture, Response regulatory spans 63 to 181 (KVLLVDSDDS…ELKNLWQHVW (119 aa)). A compositionally biased stretch (low complexity) spans 186 to 195 (SSSGSGSESG). Disordered stretches follow at residues 186 to 249 (SSSG…SWTK), 290 to 346 (PCTS…PLQN), 375 to 402 (DAQQAARATNAPNCSSKVPEGKDKNRDN), 478 to 570 (MKSN…VQSN), 590 to 671 (NGGS…GNDM), and 697 to 742 (NFGK…AADR). The span at 236–248 (DNGSGTQAQSSWT) shows a compositional bias: polar residues. A compositionally biased stretch (basic and acidic residues) spans 299–313 (KQKETNDDFKGKDLE). Residues 318–330 (RNLNTAYQSSPNE) show a composition bias toward polar residues. Positions 331 to 341 (RSIKPTDRRNE) are enriched in basic and acidic residues. Over residues 380-390 (ARATNAPNCSS) the composition is skewed to polar residues. Over residues 490–502 (GSNGSSNNNDMGS) the composition is skewed to low complexity. Polar residues predominate over residues 503 to 512 (TTKNVVTKPS). A compositionally biased stretch (low complexity) spans 618–634 (NGSNSGSNNGSNGQNGS). Over residues 656 to 667 (GPGGGNGSGSGS) the composition is skewed to gly residues. Residues 682–724 (RVAAVIKFRQKRKERNFGKKVRYQSRKRLAEQRPRVRGQFVRQ) enclose the CCT domain. Positions 697–708 (NFGKKVRYQSRK) are enriched in basic residues. The segment covering 719–731 (GQFVRQAVQDQQQ) has biased composition (low complexity).

This sequence belongs to the ARR-like family.

It localises to the nucleus. Its function is as follows. Controls photoperiodic flowering response. Seems to be one of the component of the circadian clock. Expression of several members of the ARR-like family is controlled by circadian rhythm. The particular coordinated sequential expression of PRR73, PRR37, PRR95, PRR59 and PPR1 result to circadian waves that may be at the basis of the endogenous circadian clock. This chain is Two-component response regulator-like PRR37 (PRR37), found in Oryza sativa subsp. indica (Rice).